The following is a 284-amino-acid chain: 4-diphosphocytidyl-2-C-methyl-D-erythritol kinase (284 aa).

The active site involves Lys-9. Pro-92–Ser-102 is a binding site for ATP. Asp-134 is an active-site residue.

It belongs to the GHMP kinase family. IspE subfamily.

It carries out the reaction 4-CDP-2-C-methyl-D-erythritol + ATP = 4-CDP-2-C-methyl-D-erythritol 2-phosphate + ADP + H(+). The protein operates within isoprenoid biosynthesis; isopentenyl diphosphate biosynthesis via DXP pathway; isopentenyl diphosphate from 1-deoxy-D-xylulose 5-phosphate: step 3/6. Functionally, catalyzes the phosphorylation of the position 2 hydroxy group of 4-diphosphocytidyl-2C-methyl-D-erythritol. The polypeptide is 4-diphosphocytidyl-2-C-methyl-D-erythritol kinase (Stutzerimonas stutzeri (strain A1501) (Pseudomonas stutzeri)).